Reading from the N-terminus, the 272-residue chain is Enoyl-[acyl-carrier-protein] reductase [NADH] 1 (272 aa).

Residues Gly-17, 23–24, Gln-44, 68–69, and Ile-96 each bind NAD(+); these read SI and DV. Residues Tyr-149 and Tyr-159 each act as proton acceptor in the active site. Residues Lys-166 and 195–199 each bind NAD(+); that span reads IKTLA.

It belongs to the short-chain dehydrogenases/reductases (SDR) family. FabI subfamily.

It is found in the cell inner membrane. It catalyses the reaction a 2,3-saturated acyl-[ACP] + NAD(+) = a (2E)-enoyl-[ACP] + NADH + H(+). It participates in lipid metabolism; fatty acid biosynthesis. In Rhizobium meliloti (strain 1021) (Ensifer meliloti), this protein is Enoyl-[acyl-carrier-protein] reductase [NADH] 1 (fabI1).